The following is a 203-amino-acid chain: A-type ATP synthase subunit E (203 aa).

It belongs to the V-ATPase E subunit family. Might form a homodimer. Interacts with subunit H via residues 41-60. The A-type ATPase is composed of subunits A(3), B(3), C, D, E(1 or 2), F, H(2), I and K(x).

It localises to the cell membrane. Component of the A-type ATP synthase that produces ATP from ADP in the presence of a proton gradient across the membrane. The protein is A-type ATP synthase subunit E of Methanocaldococcus jannaschii (strain ATCC 43067 / DSM 2661 / JAL-1 / JCM 10045 / NBRC 100440) (Methanococcus jannaschii).